Consider the following 358-residue polypeptide: Phosphoserine aminotransferase (358 aa).

Arginine 41 lines the L-glutamate pocket. Pyridoxal 5'-phosphate-binding positions include 75 to 76 (AS), tryptophan 100, threonine 148, aspartate 167, and glutamine 190. Lysine 191 carries the post-translational modification N6-(pyridoxal phosphate)lysine. 233–234 (NT) serves as a coordination point for pyridoxal 5'-phosphate.

Belongs to the class-V pyridoxal-phosphate-dependent aminotransferase family. SerC subfamily. As to quaternary structure, homodimer. It depends on pyridoxal 5'-phosphate as a cofactor.

It is found in the cytoplasm. It catalyses the reaction O-phospho-L-serine + 2-oxoglutarate = 3-phosphooxypyruvate + L-glutamate. The catalysed reaction is 4-(phosphooxy)-L-threonine + 2-oxoglutarate = (R)-3-hydroxy-2-oxo-4-phosphooxybutanoate + L-glutamate. Its pathway is amino-acid biosynthesis; L-serine biosynthesis; L-serine from 3-phospho-D-glycerate: step 2/3. The protein operates within cofactor biosynthesis; pyridoxine 5'-phosphate biosynthesis; pyridoxine 5'-phosphate from D-erythrose 4-phosphate: step 3/5. Catalyzes the reversible conversion of 3-phosphohydroxypyruvate to phosphoserine and of 3-hydroxy-2-oxo-4-phosphonooxybutanoate to phosphohydroxythreonine. The polypeptide is Phosphoserine aminotransferase (Campylobacter jejuni (strain RM1221)).